We begin with the raw amino-acid sequence, 281 residues long: uncharacterized protein (281 aa).

Disordered regions lie at residues 192 to 212 (SNSSVNLSMDKKSDDSKIQET) and 227 to 281 (EDYV…SEEY). The span at 200-211 (MDKKSDDSKIQE) shows a compositional bias: basic and acidic residues. 2 stretches are compositionally biased toward acidic residues: residues 227–240 (EDYVDGNEDCISDN) and 249–260 (DTDSDLGDLEDP).

The protein belongs to the cullin family.

This is an uncharacterized protein from Acanthamoeba polyphaga (Amoeba).